Reading from the N-terminus, the 676-residue chain is MGVTGILQLPRDRFKRTSFFLWVIILFQRTFSIPLGVIHNSTLQVNDVDKLVCRDKLSSTNQLRSVGLNLEGNGVATDVPSATKRWGFRSGVPPKVVNYEAGEWAENCYNLEIKKPDGSECLPAAPDGIRGFPRCRYVHKVSGTGPCAGDFAFHKEGAFFLYDRLASTVIYRGTTFAEGVVAFLILPQAKKDFFSSHPLREPVNATEDPSSGYYSTTIRYQATGFGTNETEYLFEVDNLTYVQLESRFTPQFLLQLNETIYTSGKRSNTTGKLIWKVNPEIDTTIGEWAFWETKKNLTRKIRSEELSFTVVSNGAKNISGQSPARTSSDPGTNTTTEDHKIMASENSSAMVQVHSQGREAAVSHLTTLATISTSPQSLTTKPGPDNSTHNTPVYKLDISEATQVEQHHRRTDNDSTASDTPSATTAAGPPKAENTNTSKSTDFLDPATTTSPQNHSETAGNNNTHHQDTGEESASSGKLGLITNTIAGVAGLITGGRRTRREAIVNAQPKCNPNLHYWTTQDEGAAIGLAWIPYFGPAAEGIYTEGLMHNQNGLICGLRQLANETTQALQLFLRATTELRTFSILNRKAIDFLLQRWGGTCHILGPDCCIEPHDWTKNITDKIDQIIHDFVDKTLPDQGDNDNWWTGWRQWIPAGIGVTGVIIAVIALFCICKFVF.

Residues Met-1–Ser-32 form the signal peptide. Residues Ile-33–Gln-650 lie on the Extracellular side of the membrane. The N-linked (GlcNAc...) asparagine; by host glycan is linked to Asn-40. 5 disulfide bridges follow: Cys-53/Cys-609, Cys-108/Cys-135, Cys-121/Cys-147, Cys-511/Cys-556, and Cys-601/Cys-608. The segment at Arg-54–Glu-201 is receptor-binding. N-linked (GlcNAc...) asparagine; by host glycans are attached at residues Asn-204, Asn-228, Asn-238, Asn-257, Asn-268, Asn-296, Asn-317, Asn-333, Asn-346, Asn-386, and Asn-413. Residues Glu-305–Thr-485 form a mucin-like region region. Residues Ala-315–Thr-335 show a composition bias toward polar residues. Positions Ala-315–Glu-337 are disordered. The segment covering Thr-373–Thr-391 has biased composition (polar residues). Disordered stretches follow at residues Thr-373 to Pro-392 and Thr-402 to Leu-479. Low complexity predominate over residues Asp-414–Ala-432. Residues Glu-433 to Thr-464 are compositionally biased toward polar residues. Asn-436, Asn-454, and Asn-462 each carry an N-linked (GlcNAc...) asparagine; by host glycan. The interval Gly-524–Ala-539 is fusion peptide. Residues Leu-554–Gln-595 are a coiled coil. The N-linked (GlcNAc...) asparagine; by host glycan is linked to Asn-563. Residues Trp-615–Thr-634 adopt a coiled-coil conformation. The N-linked (GlcNAc...) asparagine; by host glycan is linked to Asn-618. The helical transmembrane segment at Trp-651 to Ile-671 threads the bilayer. S-palmitoyl cysteine; by host attachment occurs at residues Cys-670 and Cys-672. The Cytoplasmic portion of the chain corresponds to Cys-672–Phe-676.

Belongs to the filoviruses glycoprotein family. As to quaternary structure, homotrimer; each monomer consists of a GP1 and a GP2 subunit linked by disulfide bonds. The resulting peplomers (GP1,2) protrude from the virus surface as spikes. Interacts with host integrin alpha-V/ITGAV. Interacts with host CLEC10A. Binds also to host CD209 and CLEC4M/DC-SIGN(R). Interacts with host FOLR1. Interacts with BST2; this interaction inhibits the antiviral effect of BST2 and this allows viral release from infected cells. Interacts with host FCN1; this interaction enhances viral entry. Interacts with host TLR4; this interaction induces cell death in T-lymphocytes or proinflammatory cytokines and SOCS1 production in monocytes. Interacts with host entry receptor NPC1. In terms of assembly, GP1 and GP2delta are part of GP1,2delta soluble complexes released by ectodomain shedding. In terms of processing, the signal peptide region modulates GP's high mannose glycosylation, thereby determining the efficiency of the interactions with DC-SIGN(R). N-glycosylated. Post-translationally, O-glycosylated in the mucin-like region. In terms of processing, palmitoylation of GP2 is not required for its function. Specific enzymatic cleavages in vivo yield mature proteins. The precursor is processed into GP1 and GP2 by host cell furin in the trans Golgi, and maybe by other host proteases, to yield the mature GP1 and GP2 proteins. The cleavage site corresponds to the furin optimal cleavage sequence [KR]-X-[KR]-R. This cleavage does not seem to be required for function. After the internalization of the virus into cell endosomes, GP1 C-terminus is removed by the endosomal proteases cathepsin B, cathepsin L, or both, leaving a 19-kDa N-terminal fragment which is further digested by cathepsin B. Proteolytic processing of GP1,2 by host ADAM17 can remove the transmembrane anchor of GP2 and leads to shedding of complexes consisting in GP1 and truncated GP2 (GP1,2delta).

It localises to the virion membrane. Its subcellular location is the host cell membrane. The protein localises to the secreted. Its function is as follows. Trimeric GP1,2 complexes form the virion surface spikes and mediate the viral entry processes, with GP1 acting as the receptor-binding subunit and GP2 as the membrane fusion subunit. At later times of infection, down-regulates the expression of various host cell surface molecules that are essential for immune surveillance and cell adhesion. Down-modulates several integrins including ITGA1, ITGA2, ITGA3, ITGA4, ITGA5, ITGA6, ITGAV and ITGB1. This decrease in cell adhesion molecules may lead to cell detachment, contributing to the disruption of blood vessel integrity and hemorrhages developed during infection (cytotoxicity). Interacts with host TLR4 and thereby stimulates the differentiation and activation of monocytes leading to bystander death of T-lymphocytes. Down-regulates as well the function of host natural killer cells. Counteracts the antiviral effect of host BST2/tetherin that restricts release of progeny virions from infected cells. However, cooperates with VP40 and host BST2 to activate canonical NF-kappa-B pathway in a manner dependent on neddylation. In terms of biological role, functions as a decoy for anti-GP1,2 antibodies thereby contributing to viral immune evasion. Interacts and activates host macrophages and dendritic cells inducing up-regulation of cytokine transcription. This effect is mediated throught activation of host TLR4. Functionally, responsible for binding to the receptor(s) on target cells. Interacts with CD209/DC-SIGN and CLEC4M/DC-SIGNR which act as cofactors for virus entry into dendritic cells (DCs) and endothelial cells. Binding to the macrophage specific lectin CLEC10A also seems to enhance virus infectivity. Interaction with FOLR1/folate receptor alpha may be a cofactor for virus entry in some cell types, although results are contradictory. Members of the Tyro3 receptor tyrosine kinase family also seem to be cell entry factors in filovirus infection. Once attached, the virions are internalized through clathrin-dependent endocytosis and/or macropinocytosis. After internalization of the virus into the endosomes of the host cell, proteolysis of GP1 by two cysteine proteases, CTSB/cathepsin B and CTSL/cathepsin L removes the glycan cap and allows GP1 binding to the host entry receptor NPC1. NPC1-binding, Ca(2+) and acidic pH induce a conformational change of GP2, which unmasks its fusion peptide and permit membranes fusion. Acts as a class I viral fusion protein. Under the current model, the protein has at least 3 conformational states: pre-fusion native state, pre-hairpin intermediate state, and post-fusion hairpin state. During viral and target cell membrane fusion, the coiled coil regions (heptad repeats) assume a trimer-of-hairpins structure, positioning the fusion peptide in close proximity to the C-terminal region of the ectodomain. The formation of this structure appears to drive apposition and subsequent fusion of viral and target cell membranes. Responsible for penetration of the virus into the cell cytoplasm by mediating the fusion of the membrane of the endocytosed virus particle with the endosomal membrane. Low pH in endosomes induces an irreversible conformational change in GP2, releasing the fusion hydrophobic peptide. This chain is Envelope glycoprotein (GP), found in Epomops franqueti (Franquet's epauletted fruit bat).